The chain runs to 144 residues: Small ribosomal subunit protein bS6 (144 aa).

The tract at residues 95–144 (PVTTPSPMMQDDKSKPDENSRGTAAPTVNVADDSASGAQVVAAEENDTQS) is disordered. Positions 104 to 114 (QDDKSKPDENS) are enriched in basic and acidic residues.

This sequence belongs to the bacterial ribosomal protein bS6 family.

Functionally, binds together with bS18 to 16S ribosomal RNA. This is Small ribosomal subunit protein bS6 from Nitrosomonas eutropha (strain DSM 101675 / C91 / Nm57).